We begin with the raw amino-acid sequence, 317 residues long: Ribosomal RNA small subunit methyltransferase H (317 aa).

S-adenosyl-L-methionine is bound by residues 32–34, Asp51, Phe78, Asp99, and Gln106; that span reads GGH.

This sequence belongs to the methyltransferase superfamily. RsmH family.

It localises to the cytoplasm. It carries out the reaction cytidine(1402) in 16S rRNA + S-adenosyl-L-methionine = N(4)-methylcytidine(1402) in 16S rRNA + S-adenosyl-L-homocysteine + H(+). Functionally, specifically methylates the N4 position of cytidine in position 1402 (C1402) of 16S rRNA. The sequence is that of Ribosomal RNA small subunit methyltransferase H from Helicobacter hepaticus (strain ATCC 51449 / 3B1).